Reading from the N-terminus, the 256-residue chain is Sorbitol dehydrogenase (256 aa).

Residues 15 to 17, Asp36, 59 to 60, Asn86, Tyr152, Lys156, and 182 to 187 contribute to the NAD(+) site; these read RGI, DV, and PGVVDG. Residue Tyr152 is the Proton acceptor of the active site.

This sequence belongs to the short-chain dehydrogenases/reductases (SDR) family. Homodimer. May function as a tetramer in vivo.

The catalysed reaction is keto-D-fructose + NADH + H(+) = D-sorbitol + NAD(+). It carries out the reaction galactitol + NAD(+) = keto-D-tagatose + NADH + H(+). It catalyses the reaction L-iditol + NAD(+) = keto-L-sorbose + NADH + H(+). Its activity is regulated as follows. Inhibited by DTT, N-bromosuccinimide and iodoacetic acid. Its function is as follows. Catalyzes the oxidation of D-sorbitol (D-glucitol) to D-fructose. Can also catalyze the oxidation of galactitol to D-tagatose and the oxidation of L-iditol, with lower efficiency. The chain is Sorbitol dehydrogenase (polS) from Cereibacter sphaeroides (Rhodobacter sphaeroides).